Here is a 502-residue protein sequence, read N- to C-terminus: Cytochrome c-552 (502 aa).

An N-terminal signal peptide occupies residues 1-25 (MKYLTKSRVIATIAMLGCLSVSAWA). Histidine 105 serves as a coordination point for heme c. Cysteine 133, cysteine 136, and lysine 137 together coordinate heme. The heme c site is built by cysteine 171, cysteine 174, histidine 175, cysteine 220, cysteine 223, and histidine 224. Residues glutamate 226, tyrosine 227, lysine 271, and glutamine 273 each contribute to the Ca(2+) site. Position 227 (tyrosine 227) interacts with substrate. Histidine 274 contacts substrate. Heme c contacts are provided by histidine 285, cysteine 292, cysteine 295, histidine 296, histidine 311, cysteine 324, cysteine 327, histidine 328, and histidine 403. Residues 481–502 (RERGLLPEVTPKSVTTPKVDAK) are disordered.

This sequence belongs to the cytochrome c-552 family. It depends on Ca(2+) as a cofactor. The cofactor is heme c.

Its subcellular location is the periplasm. It catalyses the reaction 6 Fe(III)-[cytochrome c] + NH4(+) + 2 H2O = 6 Fe(II)-[cytochrome c] + nitrite + 8 H(+). The protein operates within nitrogen metabolism; nitrate reduction (assimilation). Catalyzes the reduction of nitrite to ammonia, consuming six electrons in the process. This chain is Cytochrome c-552, found in Haemophilus ducreyi (strain 35000HP / ATCC 700724).